Here is a 216-residue protein sequence, read N- to C-terminus: Enolase-phosphatase E1 (216 aa).

Mg(2+) contacts are provided by aspartate 8 and glutamate 10. Substrate is bound by residues 115-116 and lysine 149; that span reads SS. Aspartate 172 lines the Mg(2+) pocket.

The protein belongs to the HAD-like hydrolase superfamily. MasA/MtnC family. As to quaternary structure, monomer. Mg(2+) serves as cofactor.

The protein resides in the cytoplasm. The protein localises to the nucleus. The enzyme catalyses 5-methylsulfanyl-2,3-dioxopentyl phosphate + H2O = 1,2-dihydroxy-5-(methylsulfanyl)pent-1-en-3-one + phosphate. The protein operates within amino-acid biosynthesis; L-methionine biosynthesis via salvage pathway; L-methionine from S-methyl-5-thio-alpha-D-ribose 1-phosphate: step 3/6. It functions in the pathway amino-acid biosynthesis; L-methionine biosynthesis via salvage pathway; L-methionine from S-methyl-5-thio-alpha-D-ribose 1-phosphate: step 4/6. In terms of biological role, bifunctional enzyme that catalyzes the enolization of 2,3-diketo-5-methylthiopentyl-1-phosphate (DK-MTP-1-P) into the intermediate 2-hydroxy-3-keto-5-methylthiopentenyl-1-phosphate (HK-MTPenyl-1-P), which is then dephosphorylated to form the acireductone 1,2-dihydroxy-3-keto-5-methylthiopentene (DHK-MTPene). In Schizosaccharomyces pombe (strain 972 / ATCC 24843) (Fission yeast), this protein is Enolase-phosphatase E1 (utr4).